The chain runs to 59 residues: Large ribosomal subunit protein uL30 (59 aa).

It belongs to the universal ribosomal protein uL30 family. As to quaternary structure, part of the 50S ribosomal subunit.

In Enterococcus faecalis (strain ATCC 700802 / V583), this protein is Large ribosomal subunit protein uL30.